Reading from the N-terminus, the 338-residue chain is Putative ankyrin repeat protein CBU_0781 (338 aa).

The disordered stretch occupies residues 1 to 31; that stretch reads MSRRETPTSTISSTPTGTRTPRRRLSRKGHP. The segment covering 7 to 19 has biased composition (low complexity); it reads PTSTISSTPTGTR. Residues 20 to 31 are compositionally biased toward basic residues; the sequence is TPRRRLSRKGHP. 2 ANK repeats span residues 92-124 and 125-157; these read QGDT…IVNK and LGET…IKYK. Positions 197-242 form a coiled coil; sequence SQIMASDKEIDEIIRNARNLQIIKKEKREAEERARTKKSKQITLQR. The interval 319 to 338 is disordered; that stretch reads KKEDTTLSRNNSLSCLSSPR. Low complexity predominate over residues 325 to 338; the sequence is LSRNNSLSCLSSPR.

In Coxiella burnetii (strain RSA 493 / Nine Mile phase I), this protein is Putative ankyrin repeat protein CBU_0781.